The primary structure comprises 719 residues: Protein STRUBBELIG-RECEPTOR FAMILY 6 (719 aa).

An N-terminal signal peptide occupies residues 1–29; the sequence is MRENWAVVALFTLCIVGFELRFIHGATDA. The Extracellular segment spans residues 30–293; that stretch reads SDTSALNTLF…SKKSGIGAGA (264 aa). 6 LRR repeats span residues 97 to 118, 119 to 140, 143 to 164, 167 to 190, 191 to 213, and 214 to 234; these read SLTE…QFPP, NLQR…SLSQ, PLKY…DFSK, SLTT…SSLT, SLKS…AGLP, and LETL…SLKG. The disordered stretch occupies residues 242-287; sequence NSFNTGPAPPPPPGTPPIRGSPSRKSGGRESRSSDESTRNGDSKKS. Positions 248–257 are enriched in pro residues; sequence PAPPPPPGTP. Over residues 268 to 286 the composition is skewed to basic and acidic residues; sequence GGRESRSSDESTRNGDSKK. A helical membrane pass occupies residues 294 to 314; sequence IAGIIISLLVVTALLVAFFLF. Over 315 to 719 the chain is Cytoplasmic; that stretch reads RRKKSKRSSP…GSADTTSDYM (405 aa). 2 disordered regions span residues 322–355 and 364–383; these read SSPM…SSVE and SINL…DEDS. Residues 332-354 show a composition bias toward polar residues; the sequence is NQPFTLASNDFHENNSIQSSSSV. The residue at position 377 (S377) is a Phosphoserine. Residues 416 to 690 form the Protein kinase domain; that stretch reads FSVDNLLGEG…SEVVQALVVL (275 aa). ATP-binding positions include 422–430 and K444; that span reads LGEGTFGRV. Residues 700-719 are disordered; the sequence is TVGVDPSQRAGSADTTSDYM. A compositionally biased stretch (polar residues) spans 708-719; the sequence is RAGSADTTSDYM.

This sequence belongs to the protein kinase superfamily. Ser/Thr protein kinase family. Expressed in seedlings, roots, stems, leaves, flowers and siliques.

Its subcellular location is the membrane. The protein is Protein STRUBBELIG-RECEPTOR FAMILY 6 (SRF6) of Arabidopsis thaliana (Mouse-ear cress).